The primary structure comprises 240 residues: Putative protein FAM10A4 (240 aa).

The tract at residues 38–94 is disordered; that stretch reads MGGTATQKAKSEENTKEEKPDSKVEEDLKADEPSSEESDLEIDKEGVIEPDTDAPQE. Basic and acidic residues predominate over residues 46–69; that stretch reads AKSEENTKEEKPDSKVEEDLKADE. Residues 85 to 94 show a composition bias toward acidic residues; it reads IEPDTDAPQE. 3 TPR repeats span residues 110–143, 145–177, and 179–211; these read ANDK…NPRL, ILYA…NPDS, and QPYK…DYDE. The segment at 220–240 is disordered; it reads VQPRAQKIAEHQRKYERKREE. Over residues 226–240 the composition is skewed to basic and acidic residues; that stretch reads KIAEHQRKYERKREE.

It belongs to the FAM10 family. In terms of tissue distribution, highly expressed in bone marrow and weakly in placenta, pancreas, heart and HeLa cell line.

It is found in the cytoplasm. The protein is Putative protein FAM10A4 (ST13P4) of Homo sapiens (Human).